A 270-amino-acid polypeptide reads, in one-letter code: Sec-independent protein translocase protein TatC (270 aa).

Helical transmembrane passes span leucine 35 to glutamine 55, alanine 93 to isoleucine 113, tryptophan 124 to tyrosine 144, valine 176 to leucine 196, glutamine 209 to proline 229, and proline 231 to leucine 251.

Belongs to the TatC family. As to quaternary structure, forms a complex with TatA.

Its subcellular location is the cell membrane. Functionally, part of the twin-arginine translocation (Tat) system that transports large folded proteins containing a characteristic twin-arginine motif in their signal peptide across membranes. This chain is Sec-independent protein translocase protein TatC, found in Deinococcus radiodurans (strain ATCC 13939 / DSM 20539 / JCM 16871 / CCUG 27074 / LMG 4051 / NBRC 15346 / NCIMB 9279 / VKM B-1422 / R1).